A 132-amino-acid chain; its full sequence is Small ribosomal subunit protein uS8 (132 aa).

This sequence belongs to the universal ribosomal protein uS8 family. In terms of assembly, part of the 30S ribosomal subunit. Contacts proteins S5 and S12.

Its function is as follows. One of the primary rRNA binding proteins, it binds directly to 16S rRNA central domain where it helps coordinate assembly of the platform of the 30S subunit. The polypeptide is Small ribosomal subunit protein uS8 (Clostridium perfringens (strain ATCC 13124 / DSM 756 / JCM 1290 / NCIMB 6125 / NCTC 8237 / Type A)).